Here is a 213-residue protein sequence, read N- to C-terminus: Imidazole glycerol phosphate synthase subunit HisH (213 aa).

The 208-residue stretch at 6-213 (LVTVIDYGMG…FKNFLNWNGQ (208 aa)) folds into the Glutamine amidotransferase type-1 domain. The active-site Nucleophile is C86. Catalysis depends on residues H192 and E194.

In terms of assembly, heterodimer of HisH and HisF.

The protein resides in the cytoplasm. It carries out the reaction 5-[(5-phospho-1-deoxy-D-ribulos-1-ylimino)methylamino]-1-(5-phospho-beta-D-ribosyl)imidazole-4-carboxamide + L-glutamine = D-erythro-1-(imidazol-4-yl)glycerol 3-phosphate + 5-amino-1-(5-phospho-beta-D-ribosyl)imidazole-4-carboxamide + L-glutamate + H(+). It catalyses the reaction L-glutamine + H2O = L-glutamate + NH4(+). Its pathway is amino-acid biosynthesis; L-histidine biosynthesis; L-histidine from 5-phospho-alpha-D-ribose 1-diphosphate: step 5/9. Functionally, IGPS catalyzes the conversion of PRFAR and glutamine to IGP, AICAR and glutamate. The HisH subunit catalyzes the hydrolysis of glutamine to glutamate and ammonia as part of the synthesis of IGP and AICAR. The resulting ammonia molecule is channeled to the active site of HisF. The polypeptide is Imidazole glycerol phosphate synthase subunit HisH (Hydrogenovibrio crunogenus (strain DSM 25203 / XCL-2) (Thiomicrospira crunogena)).